The chain runs to 555 residues: 3-oxocholest-4-en-26-oate--CoA ligase (555 aa).

Residues 172–180 (TGGTTGHPK), Asp418, Arg433, and Lys524 each bind ATP. Positions 525–555 (PDYRWAKDQTGLRPADEVYNNGDGNGAAATG) are disordered. The span at 544–555 (NNGDGNGAAATG) shows a compositional bias: low complexity.

The protein belongs to the ATP-dependent AMP-binding enzyme family.

It catalyses the reaction (25S)-3-oxocholest-4-en-26-oate + ATP + CoA = (25S)-3-oxocholest-4-en-26-oyl-CoA + AMP + diphosphate. It functions in the pathway steroid metabolism; cholesterol metabolism. Involved in the degradation of the side chains of C-24 branched-chain sterols. Catalyzes the ATP-dependent CoA thioesterification of the sterol 3-oxocholest-4-en-26-oate to yield 3-oxocholest-4-en-26-oyl-CoA. It can also use beta-sitosterol, campesterol and 3beta-hydroxy-5-cholesten-26-oate. The sequence is that of 3-oxocholest-4-en-26-oate--CoA ligase from Rhodococcus rhodochrous.